The sequence spans 716 residues: DNA ligase (716 aa).

NAD(+) is bound by residues 49-53 (DAEYD), 98-99 (SL), and Glu131. Lys133 serves as the catalytic N6-AMP-lysine intermediate. NAD(+)-binding residues include Arg154, Glu191, Lys308, and Lys332. Positions 437, 439, 461, and 467 each coordinate Zn(2+). In terms of domain architecture, BRCT spans 638–716 (KRHSPIATKT…EDEWLQLIAE (79 aa)).

The protein belongs to the NAD-dependent DNA ligase family. LigA subfamily. The cofactor is Mg(2+). Mn(2+) serves as cofactor.

The catalysed reaction is NAD(+) + (deoxyribonucleotide)n-3'-hydroxyl + 5'-phospho-(deoxyribonucleotide)m = (deoxyribonucleotide)n+m + AMP + beta-nicotinamide D-nucleotide.. Functionally, DNA ligase that catalyzes the formation of phosphodiester linkages between 5'-phosphoryl and 3'-hydroxyl groups in double-stranded DNA using NAD as a coenzyme and as the energy source for the reaction. It is essential for DNA replication and repair of damaged DNA. This chain is DNA ligase, found in Bradyrhizobium sp. (strain BTAi1 / ATCC BAA-1182).